The sequence spans 1280 residues: Clustered mitochondria protein homolog (1280 aa).

Positions 1–27 (MAASSNDASKSAMANSNVTTEVAQTPS) are enriched in polar residues. Disordered regions lie at residues 1–49 (MAAS…GQLP) and 169–189 (GLDQ…LADY). The segment covering 32–43 (VNGEVEATEEDG) has biased composition (acidic residues). A Clu domain is found at 338-582 (DLARTQESYL…RLTPLDVAWI (245 aa)). Disordered regions lie at residues 633–669 (KANK…EPEQ), 905–943 (GAAV…AVSL), and 1214–1280 (TGRN…TQKP). The span at 635–648 (NKARGGRRRLPKAQ) shows a compositional bias: basic residues. Basic and acidic residues predominate over residues 649 to 669 (KKADAGKEVDGEKKAEAEPEQ). The segment covering 1221–1235 (PAAATPSVSDAAAAA) has biased composition (low complexity). The segment covering 1245-1261 (VDQRKIEDLLKYIEGES) has biased composition (basic and acidic residues). Residues 1265–1280 (PTKKRTQNPRKRTQKP) show a composition bias toward basic residues.

Belongs to the CLU family. In terms of assembly, may associate with the eukaryotic translation initiation factor 3 (eIF-3) complex.

The protein localises to the cytoplasm. Its function is as follows. mRNA-binding protein involved in proper cytoplasmic distribution of mitochondria. This is Clustered mitochondria protein homolog from Phaeosphaeria nodorum (strain SN15 / ATCC MYA-4574 / FGSC 10173) (Glume blotch fungus).